Reading from the N-terminus, the 349-residue chain is Glycosyltransferase 8 domain-containing protein 2 (349 aa).

Residues 1-6 (MALLRK) are Cytoplasmic-facing. A helical; Signal-anchor for type II membrane protein membrane pass occupies residues 7–24 (INQVLLFLLIVTLCVILY). Over 25–349 (KKVHKGTVSK…AGIFKLNHHS (325 aa)) the chain is Lumenal. An N-linked (GlcNAc...) asparagine glycan is attached at Asn-234.

Belongs to the glycosyltransferase 8 family.

It localises to the membrane. The protein is Glycosyltransferase 8 domain-containing protein 2 (GLT8D2) of Macaca fascicularis (Crab-eating macaque).